A 527-amino-acid chain; its full sequence is tRNA pseudouridine synthase Pus10 (527 aa).

Zn(2+) contacts are provided by cysteine 21 and cysteine 24. The stretch at 42–87 (KELLNELQKFLEPEKPELILEAPNPPLKKIRLHEDGIDNLSEDGKE) forms a coiled coil. At serine 82 the chain carries Phosphoserine. Residues cysteine 107 and cysteine 110 each coordinate Zn(2+). The interval 302–315 (TPWIIDGERKMESS) is RNA binding forefinger loop. Catalysis depends on aspartate 342, which acts as the Nucleophile. The segment at 440–455 (QKTPLRVLHRRPLAVR) is RNA binding thumb loop.

Belongs to the pseudouridine synthase Pus10 family. As to quaternary structure, interacts with components of the microprocessor complex DROSHA and DGCR8. Post-translationally, proteolytically cleaved during TRAIL-induced cell death. Cleaved, in vitro, either by caspase-3 (CASP3) or caspase-8 (CASP8).

It is found in the nucleus. It localises to the cytoplasm. Its subcellular location is the mitochondrion. The catalysed reaction is uridine(55) in tRNA = pseudouridine(55) in tRNA. The enzyme catalyses uridine(54) in tRNA = pseudouridine(54) in tRNA. Protein with different functions depending on its subcellular location: involved in miRNA processing in the nucleus and acts as a tRNA pseudouridylate synthase in the cytoplasm. In the cytoplasm, acts as a pseudouridylate synthase by catalyzing synthesis of pseudouridine(54) and pseudouridine(55) from uracil-54 and uracil-55, respectively, in the psi GC loop of a subset of tRNAs. tRNA pseudouridylate synthase activity is enhanced by the presence of 1-methyladenosine at position 53-61 of tRNAs. Does not show tRNA pseudouridylate synthase activity in the nucleus. In the nucleus, promotes primary microRNAs (pri-miRNAs) processing independently of its RNA pseudouridylate synthase activity. Binds pri-miRNAs. Modulator of TRAIL/TNFSF10-induced cell death via activation of procaspase-8 and BID cleavage. Required for the progression of the apoptotic signal through intrinsic mitochondrial cell death. The polypeptide is tRNA pseudouridine synthase Pus10 (Mus musculus (Mouse)).